The following is a 259-amino-acid chain: MTEAIPKGSLGSPLLTFPPLEEGVLVKRYKRFLADVELVSGEIVTAHCANTGPMTGVLHPGGRVRLRHAPSPKRKLAWTWEQAEAPSSQGGLCWVGINTALANSLIRAAIEAGHLKQVLGPIAAIRPEVTYGSNRRSRIDLLLTPDANCSDTRPIYLEVKNTTWNEHSLALFPDTVTERGQKHLKELIGVLPESRAVLVPCLSRHDVQTFAPGDSADPRYGELFRLALTAGVEVIPCCFGFHRDKITWEGLRPTKTTQS.

This sequence belongs to the SfsA family.

The sequence is that of Sugar fermentation stimulation protein homolog from Prochlorococcus marinus (strain MIT 9303).